The sequence spans 680 residues: Anosmin-1 (680 aa).

The signal sequence occupies residues 1 to 24; the sequence is MVPGVPGAVLTLCLWLAASSGCLA. Disulfide bonds link cysteine 49–cysteine 83, cysteine 53–cysteine 77, cysteine 86–cysteine 105, cysteine 90–cysteine 101, and cysteine 116–cysteine 120. N-linked (GlcNAc...) asparagine glycosylation is present at asparagine 71. The 50-residue stretch at 127-176 folds into the WAP domain; the sequence is LLVKQGDCPAPEKASGFAAACVESCEVDNECSGVKKCCSNGCGHTCQVPK. Fibronectin type-III domains follow at residues 186-287, 292-400, 425-523, and 550-658; these read PRKE…SKDP, APAN…THAT, PTRP…TPPC, and KPEN…LPPS. Asparagine 209, asparagine 300, asparagine 470, asparagine 553, and asparagine 564 each carry an N-linked (GlcNAc...) asparagine glycan. The interval 642-680 is disordered; it reads EGPATIKTFRTPELPPSSAHRSHLKHRHPHHYKPSPERY. The span at 661–674 shows a compositional bias: basic residues; that stretch reads HRSHLKHRHPHHYK.

As to quaternary structure, interacts with FGFR1; this interaction does not interfere with FGF2-binding to FGFR1. Binds heparin. Heparin may promote or interfere with ANOS1-FGFR1-FGF2 complex formation depending on the sequential order of its binding to the various constituents. For instance, heparin-ANOS1 interaction favors subsequent binding to pre-existing binary FGFR1-FGF2 complex, while heparin-FGF2 complex does not interact with ANOS1-FGFR1. N-glycosylated. Post-translationally, may be proteolytically cleaved at the cell surface and released from the cell surface. Expressed in the cerebellum (at protein level).

It is found in the cell membrane. The protein resides in the secreted. Its function is as follows. Has a dual branch-promoting and guidance activity, which may play an important role in the patterning of mitral and tufted cell collaterals to the olfactory cortex. Chemoattractant for fetal olfactory epithelial cells. The sequence is that of Anosmin-1 from Homo sapiens (Human).